A 597-amino-acid polypeptide reads, in one-letter code: K(+) efflux antiporter 6 (597 aa).

Positions 1 to 35 (MVEGRRRRRFSLSSQQLALLLLLLSFFLCFSVASP) are cleaved as a signal peptide. 12 helical membrane-spanning segments follow: residues 177–197 (LISD…AFAC), 201–221 (PVIT…LNFI), 224–244 (MVQV…ALGL), 257–277 (VAVL…GITV), 287–307 (GVFV…KFLM), 321–341 (IGIL…LPVL), 351–371 (MLSI…LSIL), 396–416 (LAAV…GLSL), 440–460 (IEPI…MLVN), 461–481 (VHFL…VIII), 499–519 (TALL…VLLS), and 543–563 (LVTT…GILL).

This sequence belongs to the monovalent cation:proton antiporter 2 (CPA2) transporter (TC 2.A.37) family. KEA (TC 2.A.37.1) subfamily. Expressed in roots, stems, leaves, flowers and silique.

Its subcellular location is the golgi apparatus membrane. It is found in the golgi apparatus. The protein resides in the trans-Golgi network membrane. It localises to the prevacuolar compartment membrane. The protein localises to the endomembrane system. It catalyses the reaction K(+)(in) + H(+)(out) = K(+)(out) + H(+)(in). In terms of biological role, electroneutral K(+)/H(+) efflux antiporter involved in K(+) homeostasis and osmotic adjustment. Together with KEA4 and KEA5, promotes growth and development, and facilitates endosomal pH and ions homeostasis, as well as salt tolerance (e.g. K(+), NaCl and LiCl), probably by supporting cell wall biosynthesis during rapid etiolated seedling growth. This chain is K(+) efflux antiporter 6, found in Arabidopsis thaliana (Mouse-ear cress).